Here is a 141-residue protein sequence, read N- to C-terminus: Hemoglobin subunit alpha (141 aa).

The Globin domain occupies 1 to 141 (VLSPADKTNV…VSTVLTSKYR (141 aa)). Phosphoserine is present on serine 3. Lysine 7 bears the N6-succinyllysine mark. Threonine 8 is modified (phosphothreonine). At lysine 11 the chain carries N6-succinyllysine. Lysine 16 is subject to N6-acetyllysine; alternate. Lysine 16 carries the post-translational modification N6-succinyllysine; alternate. The residue at position 24 (tyrosine 24) is a Phosphotyrosine. Position 35 is a phosphoserine (serine 35). Lysine 40 is modified (N6-succinyllysine). Serine 49 is modified (phosphoserine). An O2-binding site is contributed by histidine 58. Histidine 87 contributes to the heme b binding site. Serine 102 carries the phosphoserine modification. Threonine 108 is modified (phosphothreonine). Residues serine 124 and serine 131 each carry the phosphoserine modification. Phosphothreonine is present on residues threonine 134 and threonine 137. The residue at position 138 (serine 138) is a Phosphoserine.

It belongs to the globin family. Heterotetramer of two alpha chains and two beta chains. As to expression, red blood cells.

In terms of biological role, involved in oxygen transport from the lung to the various peripheral tissues. Its function is as follows. Hemopressin acts as an antagonist peptide of the cannabinoid receptor CNR1. Hemopressin-binding efficiently blocks cannabinoid receptor CNR1 and subsequent signaling. The protein is Hemoglobin subunit alpha (HBA) of Urocitellus parryii (Arctic ground squirrel).